We begin with the raw amino-acid sequence, 945 residues long: Alanine--tRNA ligase (945 aa).

Zn(2+) contacts are provided by H564, H568, C666, and H670. Positions 911-945 (SGGGRPDMAQAGGKDASKLPEALQQARETMTEKLG) are disordered.

It belongs to the class-II aminoacyl-tRNA synthetase family. Zn(2+) is required as a cofactor.

The protein resides in the cytoplasm. The catalysed reaction is tRNA(Ala) + L-alanine + ATP = L-alanyl-tRNA(Ala) + AMP + diphosphate. Functionally, catalyzes the attachment of alanine to tRNA(Ala) in a two-step reaction: alanine is first activated by ATP to form Ala-AMP and then transferred to the acceptor end of tRNA(Ala). Also edits incorrectly charged Ser-tRNA(Ala) and Gly-tRNA(Ala) via its editing domain. This Rhodopirellula baltica (strain DSM 10527 / NCIMB 13988 / SH1) protein is Alanine--tRNA ligase.